Reading from the N-terminus, the 217-residue chain is ATP synthase subunit 4, mitochondrial (217 aa).

A mitochondrion-targeting transit peptide spans 1–14 (MPFARVGALSARHY). 2 helical membrane-spanning segments follow: residues 41–61 (GVLA…LYIV) and 66–86 (IVLG…GPGY).

In terms of assembly, F-type ATP synthases have 2 components, the catalytic core F(1) and the membrane-embedded component F(0), linked together by a central stalk and a peripheral stalk. The central stalk, also called rotor shaft, is often seen as part of F(1). The peripheral stalk is seen as part of F(0). F(0) contains the membrane channel next to the rotor. F-type ATP synthases form dimers but each monomer functions independently in ATP generation. The dimer consists of 17 different polypeptides: ATP1 (subunit alpha, 3 molecules per monomer, part of F(1)), ATP2 (subunit beta, 3 copies per monomer, part of F(1)), ATP3 (subunit gamma, part of the central stalk), ATP4 (subunit b, part of the peripheral stalk), ATP5/OSCP (subunit 5/OSCP, part of the peripheral stalk), ATP6 (subunit a, part of the peripheral stalk), ATP7 (subunit d, part of the peripheral stalk), ATP8 (subunit 8, part of the peripheral stalk), OLI1 (subunit c, part of the rotor, 10 molecules per monomer), ATP14 (subunit h, part of the peripheral stalk), ATP15 (subunit epsilon, part of the central stalk), ATP16 (subunit delta, part of the central stalk), ATP17 (subunit f, part of the peripheral stalk), ATP18 (subunit i/j, part of the peripheral stalk), ATP19 (subunit k, dimer-specific, at interface between monomers), ATP20 (subunit g, at interface between monomers), TIM11 (subunit e, at interface between monomers).

It is found in the mitochondrion inner membrane. Its function is as follows. Mitochondrial membrane ATP synthase (F(1)F(0) ATP synthase or Complex V) produces ATP from ADP in the presence of a proton gradient across the membrane which is generated by electron transport complexes of the respiratory chain. F-type ATP synthases consist of two structural domains, F(1) - containing the extramembraneous catalytic core, and F(0) - containing the membrane proton channel, linked together by a central stalk and a peripheral stalk. During catalysis, ATP synthesis in the catalytic domain of F(1) is coupled via a rotary mechanism of the central stalk subunits to proton translocation. Part of the complex F(0) domain and the peripheral stalk, which acts as a stator to hold the catalytic alpha/ATP1(3)beta/ATP2(3) subcomplex and subunit a/ATP6 static relative to the rotary elements. The sequence is that of ATP synthase subunit 4, mitochondrial from Yarrowia lipolytica (strain CLIB 122 / E 150) (Yeast).